The following is a 94-amino-acid chain: Co-chaperonin GroES (94 aa).

The protein belongs to the GroES chaperonin family. Heptamer of 7 subunits arranged in a ring. Interacts with the chaperonin GroEL.

It localises to the cytoplasm. In terms of biological role, together with the chaperonin GroEL, plays an essential role in assisting protein folding. The GroEL-GroES system forms a nano-cage that allows encapsulation of the non-native substrate proteins and provides a physical environment optimized to promote and accelerate protein folding. GroES binds to the apical surface of the GroEL ring, thereby capping the opening of the GroEL channel. This Geobacillus stearothermophilus (Bacillus stearothermophilus) protein is Co-chaperonin GroES.